The following is a 438-amino-acid chain: Coiled-coil domain-containing protein 78 (438 aa).

2 coiled-coil regions span residues 74–105 (HLHE…LRGD) and 217–246 (SCQG…YVLR). Positions 345 to 381 (FSHREDQHGGPGALLSSPKKRPGGASQGGTSEPQGLD) are disordered.

It belongs to the CCDC78 family. As to expression, expressed primarily in skeletal muscle.

It localises to the cytoplasm. The protein resides in the cytoskeleton. It is found in the microtubule organizing center. Its subcellular location is the centrosome. The protein localises to the centriole. It localises to the perinuclear region. The protein resides in the cell membrane. It is found in the sarcolemma. Its subcellular location is the sarcoplasmic reticulum. Its function is as follows. Component of the deuterosome, a structure that promotes de novo centriole amplification in multiciliated cells that can generate more than 100 centrioles. Deuterosome-mediated centriole amplification occurs in terminally differentiated multiciliated cells (G1/0) and not in S phase. Essential for centriole amplification and is required for CEP152 localization to the deuterosome. The chain is Coiled-coil domain-containing protein 78 (CCDC78) from Homo sapiens (Human).